The chain runs to 70 residues: Protein SlyX homolog (70 aa).

The protein belongs to the SlyX family.

The sequence is that of Protein SlyX homolog from Pseudoalteromonas atlantica (strain T6c / ATCC BAA-1087).